The primary structure comprises 130 residues: Larval cuticle protein 1 (130 aa).

The signal sequence occupies residues 1 to 16 (MFKFVMICAVLGLAVA). The Chitin-binding type R&amp;R domain occupies 43-104 (ADGFDSSLHT…PSGAWIPTPP (62 aa)).

Component of the larval cuticle. In Drosophila melanogaster (Fruit fly), this protein is Larval cuticle protein 1 (Lcp1).